Consider the following 1014-residue polypeptide: Endogenous retrovirus group K member 10 Pol protein (1014 aa).

The region spanning 57–245 (LEKGHIEPSF…TPFHYLGMQI (189 aa)) is the Reverse transcriptase domain. The LPQG motif lies at 161–164 (LPQG). A YXDD motif is present at residues 195 to 198 (YIDD). Residues 460–590 (LENALTVFTD…ADLLVSSALI (131 aa)) form the RNase H type-1 domain. Residues D469, E497, D517, and D582 each contribute to the Mg(2+) site. An Integrase-type zinc finger spans residues 587 to 628 (SALIKAQELHALTHVNAAGLKNKFDVTWKQAKDIVQHCTQCQ). Zn(2+) is bound by residues H596, H600, C624, and C627. The Integrase catalytic domain maps to 642 to 803 (RGLCPNALWQ…TSAEQHLTGK (162 aa)). The segment at residues 811 to 859 (KLIWWKDNKNKTWEIGKVITWGRGFACVSPGENQLPVWLPTRHLKFYNE) is a DNA-binding region (integrase-type).

Belongs to the beta type-B retroviral polymerase family. HERV class-II K(HML-2) pol subfamily.

It carries out the reaction DNA(n) + a 2'-deoxyribonucleoside 5'-triphosphate = DNA(n+1) + diphosphate. The catalysed reaction is Endonucleolytic cleavage to 5'-phosphomonoester.. Its function is as follows. Early post-infection, the reverse transcriptase converts the viral RNA genome into double-stranded viral DNA. The RNase H domain of the reverse transcriptase performs two functions. It degrades the RNA template and specifically removes the RNA primer from the RNA/DNA hybrid. Following nuclear import, the integrase catalyzes the insertion of the linear, double-stranded viral DNA into the host cell chromosome. Endogenous Pol proteins may have kept, lost or modified their original function during evolution. The polypeptide is Endogenous retrovirus group K member 10 Pol protein (ERVK-10) (Homo sapiens (Human)).